A 398-amino-acid polypeptide reads, in one-letter code: Bifunctional enzyme IspD/IspF (398 aa).

The segment at 1–234 (MTNSPRTAAI…SRLMAALGDI (234 aa)) is 2-C-methyl-D-erythritol 4-phosphate cytidylyltransferase. Positions 235-398 (RTGTGYDVHA…LPWGADGLAG (164 aa)) are 2-C-methyl-D-erythritol 2,4-cyclodiphosphate synthase. A divalent metal cation is bound by residues aspartate 241 and histidine 243. 4-CDP-2-C-methyl-D-erythritol 2-phosphate contacts are provided by residues 241–243 (DVH) and 267–268 (HS). Histidine 275 contributes to the a divalent metal cation binding site. 4-CDP-2-C-methyl-D-erythritol 2-phosphate contacts are provided by residues 289-291 (DIG), 365-368 (TTSE), phenylalanine 372, and arginine 375.

The protein in the N-terminal section; belongs to the IspD/TarI cytidylyltransferase family. IspD subfamily. This sequence in the C-terminal section; belongs to the IspF family. A divalent metal cation is required as a cofactor.

It catalyses the reaction 2-C-methyl-D-erythritol 4-phosphate + CTP + H(+) = 4-CDP-2-C-methyl-D-erythritol + diphosphate. The catalysed reaction is 4-CDP-2-C-methyl-D-erythritol 2-phosphate = 2-C-methyl-D-erythritol 2,4-cyclic diphosphate + CMP. Its pathway is isoprenoid biosynthesis; isopentenyl diphosphate biosynthesis via DXP pathway; isopentenyl diphosphate from 1-deoxy-D-xylulose 5-phosphate: step 2/6. It participates in isoprenoid biosynthesis; isopentenyl diphosphate biosynthesis via DXP pathway; isopentenyl diphosphate from 1-deoxy-D-xylulose 5-phosphate: step 4/6. Functionally, bifunctional enzyme that catalyzes the formation of 4-diphosphocytidyl-2-C-methyl-D-erythritol from CTP and 2-C-methyl-D-erythritol 4-phosphate (MEP) (IspD), and catalyzes the conversion of 4-diphosphocytidyl-2-C-methyl-D-erythritol 2-phosphate (CDP-ME2P) to 2-C-methyl-D-erythritol 2,4-cyclodiphosphate (ME-CPP) with a corresponding release of cytidine 5-monophosphate (CMP) (IspF). The polypeptide is Bifunctional enzyme IspD/IspF (Rhodopseudomonas palustris (strain ATCC BAA-98 / CGA009)).